Here is a 142-residue protein sequence, read N- to C-terminus: MDQKIPYDDYQLPVVFLPSYENPPAWIPPQERIHHPDYNNELAQFLPRTIVLKKPPGAQLGFNIRGGKASQLGIFISKVVPDSDAHRAGLQEGDQVLSVNEVDFQDIEHSRAVEILKTAREILMKVRYFPYNYQRQKERTVH.

A PDZ domain is found at 49-131 (TIVLKKPPGA…ILMKVRYFPY (83 aa)).

It is found in the cytoplasm. In Danio rerio (Zebrafish), this protein is PDZ domain-containing protein 11 (pdzd11).